Here is a 340-residue protein sequence, read N- to C-terminus: MTNKNAYAQSGVDVEAGYEVVERIKKHVARTERAGVMGALGGFGGMFDLSKTGVKEPVLISGTDGVGTKLMLAIKYDKHDTIGQDCVAMCVNDIIAAGAEPLYFLDYVATGKNEPAKLEQVVAGVAEGCVQAGAALIGGETAEMPGMYGEDDYDLAGFAVGVAEKSQIIDGSKVVEGDVLLGLVSSGIHSNGYSLVRRVFADYTGEEVLPELEGKKLKEVLLEPTRIYVKAVLPLIKEELVNGIAHITGGGFIENVPRMFADDLAAEIDESKVPVLPIFKALEKYGQIKHEEMFEIFNMGVGLMLAVSPENVERVKELLDEAVYEIGRIVKKENESVIIK.

It belongs to the AIR synthase family.

Its subcellular location is the cytoplasm. The enzyme catalyses 2-formamido-N(1)-(5-O-phospho-beta-D-ribosyl)acetamidine + ATP = 5-amino-1-(5-phospho-beta-D-ribosyl)imidazole + ADP + phosphate + H(+). The protein operates within purine metabolism; IMP biosynthesis via de novo pathway; 5-amino-1-(5-phospho-D-ribosyl)imidazole from N(2)-formyl-N(1)-(5-phospho-D-ribosyl)glycinamide: step 2/2. The sequence is that of Phosphoribosylformylglycinamidine cyclo-ligase from Streptococcus pneumoniae serotype 2 (strain D39 / NCTC 7466).